Here is a 242-residue protein sequence, read N- to C-terminus: Alpha-aspartyl dipeptidase (242 aa).

Residues Ser125, Asp140, and His162 each act as charge relay system in the active site.

This sequence belongs to the peptidase S51 family.

It localises to the cytoplasm. The catalysed reaction is Dipeptidase E catalyzes the hydrolysis of dipeptides Asp-|-Xaa. It does not act on peptides with N-terminal Glu, Asn or Gln, nor does it cleave isoaspartyl peptides.. Its function is as follows. Hydrolyzes dipeptides containing N-terminal aspartate residues. The polypeptide is Alpha-aspartyl dipeptidase (aad-a) (Xenopus laevis (African clawed frog)).